Consider the following 471-residue polypeptide: Glutamate--tRNA ligase (471 aa).

The short motif at 9–19 is the 'HIGH' region element; it reads PSPTGYLHVGG. Residues Cys98, Cys100, Cys125, and His127 each contribute to the Zn(2+) site. Positions 237 to 241 match the 'KMSKS' region motif; that stretch reads KLSKR. Lys240 is an ATP binding site.

The protein belongs to the class-I aminoacyl-tRNA synthetase family. Glutamate--tRNA ligase type 1 subfamily. In terms of assembly, monomer. It depends on Zn(2+) as a cofactor.

The protein localises to the cytoplasm. It catalyses the reaction tRNA(Glu) + L-glutamate + ATP = L-glutamyl-tRNA(Glu) + AMP + diphosphate. In terms of biological role, catalyzes the attachment of glutamate to tRNA(Glu) in a two-step reaction: glutamate is first activated by ATP to form Glu-AMP and then transferred to the acceptor end of tRNA(Glu). The chain is Glutamate--tRNA ligase from Escherichia coli (strain ATCC 8739 / DSM 1576 / NBRC 3972 / NCIMB 8545 / WDCM 00012 / Crooks).